The sequence spans 283 residues: Acetylglutamate kinase (283 aa).

Substrate is bound by residues 63-64 (GG), R85, and N178.

Belongs to the acetylglutamate kinase family. ArgB subfamily.

Its subcellular location is the cytoplasm. The enzyme catalyses N-acetyl-L-glutamate + ATP = N-acetyl-L-glutamyl 5-phosphate + ADP. It functions in the pathway amino-acid biosynthesis; L-arginine biosynthesis; N(2)-acetyl-L-ornithine from L-glutamate: step 2/4. Catalyzes the ATP-dependent phosphorylation of N-acetyl-L-glutamate. In Prochlorococcus marinus (strain MIT 9312), this protein is Acetylglutamate kinase.